The primary structure comprises 348 residues: Phosphate acyltransferase (348 aa).

This sequence belongs to the PlsX family. As to quaternary structure, homodimer. Probably interacts with PlsY.

The protein localises to the cytoplasm. The enzyme catalyses a fatty acyl-[ACP] + phosphate = an acyl phosphate + holo-[ACP]. The protein operates within lipid metabolism; phospholipid metabolism. In terms of biological role, catalyzes the reversible formation of acyl-phosphate (acyl-PO(4)) from acyl-[acyl-carrier-protein] (acyl-ACP). This enzyme utilizes acyl-ACP as fatty acyl donor, but not acyl-CoA. The sequence is that of Phosphate acyltransferase from Leuconostoc citreum (strain KM20).